The chain runs to 350 residues: Dihydroorotate dehydrogenase (quinone) (350 aa).

FMN is bound by residues 67–71 (AGFDK) and Gly-91. Residue Lys-71 participates in substrate binding. Substrate is bound at residue 116 to 120 (NRMGF). 2 residues coordinate FMN: Asn-144 and Asn-177. Asn-177 is a binding site for substrate. Ser-180 acts as the Nucleophile in catalysis. A substrate-binding site is contributed by Asn-182. 2 residues coordinate FMN: Lys-213 and Thr-241. 242–243 (NT) serves as a coordination point for substrate. Positions 249-268 (ASLHSDAADEEGGLSGAPIT) are disordered. FMN contacts are provided by residues Gly-264, Gly-291, and 312 to 313 (YT).

It belongs to the dihydroorotate dehydrogenase family. Type 2 subfamily. In terms of assembly, monomer. Requires FMN as cofactor.

It is found in the cell membrane. The catalysed reaction is (S)-dihydroorotate + a quinone = orotate + a quinol. Its pathway is pyrimidine metabolism; UMP biosynthesis via de novo pathway; orotate from (S)-dihydroorotate (quinone route): step 1/1. Catalyzes the conversion of dihydroorotate to orotate with quinone as electron acceptor. The protein is Dihydroorotate dehydrogenase (quinone) of Natronomonas pharaonis (strain ATCC 35678 / DSM 2160 / CIP 103997 / JCM 8858 / NBRC 14720 / NCIMB 2260 / Gabara) (Halobacterium pharaonis).